The chain runs to 117 residues: Ribonuclease P protein component (117 aa).

Belongs to the RnpA family. As to quaternary structure, consists of a catalytic RNA component (M1 or rnpB) and a protein subunit.

It carries out the reaction Endonucleolytic cleavage of RNA, removing 5'-extranucleotides from tRNA precursor.. Functionally, RNaseP catalyzes the removal of the 5'-leader sequence from pre-tRNA to produce the mature 5'-terminus. It can also cleave other RNA substrates such as 4.5S RNA. The protein component plays an auxiliary but essential role in vivo by binding to the 5'-leader sequence and broadening the substrate specificity of the ribozyme. This chain is Ribonuclease P protein component, found in Lactococcus lactis subsp. cremoris (strain MG1363).